Reading from the N-terminus, the 161-residue chain is Nucleotide-binding protein Rfer_2692 (161 aa).

Belongs to the YajQ family.

Functionally, nucleotide-binding protein. The polypeptide is Nucleotide-binding protein Rfer_2692 (Albidiferax ferrireducens (strain ATCC BAA-621 / DSM 15236 / T118) (Rhodoferax ferrireducens)).